Here is a 342-residue protein sequence, read N- to C-terminus: Phenylalanine--tRNA ligase alpha subunit (342 aa).

Position 260 (E260) interacts with Mg(2+).

Belongs to the class-II aminoacyl-tRNA synthetase family. Phe-tRNA synthetase alpha subunit type 1 subfamily. In terms of assembly, tetramer of two alpha and two beta subunits. Mg(2+) serves as cofactor.

It is found in the cytoplasm. It catalyses the reaction tRNA(Phe) + L-phenylalanine + ATP = L-phenylalanyl-tRNA(Phe) + AMP + diphosphate + H(+). The sequence is that of Phenylalanine--tRNA ligase alpha subunit from Mycobacterium avium (strain 104).